A 394-amino-acid chain; its full sequence is DNA replication and repair protein RecF (394 aa).

30–37 (GPNAAGKT) serves as a coordination point for ATP.

The protein belongs to the RecF family.

It is found in the cytoplasm. Its function is as follows. The RecF protein is involved in DNA metabolism; it is required for DNA replication and normal SOS inducibility. RecF binds preferentially to single-stranded, linear DNA. It also seems to bind ATP. The protein is DNA replication and repair protein RecF of Roseiflexus castenholzii (strain DSM 13941 / HLO8).